The chain runs to 340 residues: HTH-type transcriptional regulator PtxS (340 aa).

Residues 12 to 67 (VTINQVAEAAGVSKASVSRYIGGDRQLLADATARRIERAIDQLDYRPNQMARGLKR) form the HTH lacI-type domain. A DNA-binding region (H-T-H motif) is located at residues 14 to 33 (INQVAEAAGVSKASVSRYIG).

As to quaternary structure, interacts with PtxR in the absence of 2-ketogluconate. Binding of the 2-ketogluconate effector to PtxS causes PtxS/PtxR complex dissociation.

With respect to regulation, 2-ketogluconate acts as a molecular effector and causes dissociation of the PtxS/PtxR complex. In terms of biological role, negatively regulates glucose metabolism by binding directly to the promoter region of the kgu and gad operons. It also negatively regulates its own synthesis. In addition, in pathogenic strains, PtxS modulates PtxR activity in response to 2-ketogluconate. In the presence of PtxR, which also binds to the kgu and gad promoter regions, PtxS and PtxR form a tight complex, creating a DNA-loop that prevents RNA polymerase promoter access and expression of the glucose metabolism genes. Binding of the 2-ketogluconate effector to PtxS causes PtxS/PtxR complex dissociation and leads to the dissolution of the repression DNA-loop, facilitating the entry of the RNA polymerase and enabling the transcription of the genes. Also plays an important role in the regulation of the expression of the virulence factor exotoxin A (toxA). PtxS does not bind directly to the toxA promoter but negatively regulates the production of exotoxin A by binding to PtxR and interfering with its positive regulator activity. In the presence of 2-ketogluconate, PtxS is released and PtxR can recruit RNA polymerase. This is HTH-type transcriptional regulator PtxS from Pseudomonas aeruginosa (strain ATCC 15692 / DSM 22644 / CIP 104116 / JCM 14847 / LMG 12228 / 1C / PRS 101 / PAO1).